We begin with the raw amino-acid sequence, 506 residues long: Maturase K (506 aa).

The protein belongs to the intron maturase 2 family. MatK subfamily.

It localises to the plastid. The protein resides in the chloroplast. Functionally, usually encoded in the trnK tRNA gene intron. Probably assists in splicing its own and other chloroplast group II introns. This Trifolium fragiferum (Strawberry clover) protein is Maturase K.